A 718-amino-acid chain; its full sequence is Cyclomaltodextrin glucanotransferase (718 aa).

The signal sequence occupies residues 1-34; that stretch reads MFQMAKRAFLSTTLTLGLLAGSALPFLPASAAYA. Residues 35–172 are A1; that stretch reads DPDIAVTNKQ…GIKIIIDFAP (138 aa). 4 residues coordinate Ca(2+): Asp61, Asn63, Asn66, and Asn67. Cys77 and Cys84 are disulfide-bonded. Ca(2+) is bound by residues Gly85 and Asp87. Residue 134 to 135 participates in substrate binding; the sequence is YW. Asn173 is a binding site for Ca(2+). Residues 173–236 form a b region; sequence NHTSPAMETD…NLYDLADFNH (64 aa). Residue His174 participates in substrate binding. A Ca(2+)-binding site is contributed by Ile224. Position 227–230 (227–230) interacts with substrate; it reads NLYD. Asp233 contacts Ca(2+). Residues 237 to 440 form an A2 region; that stretch reads NNATIDKYFK…LRKSNPAIAY (204 aa). Arg261 provides a ligand contact to substrate. Asp263 functions as the Nucleophile in the catalytic mechanism. Substrate is bound at residue 266–267; sequence KH. His267 contributes to the Ca(2+) binding site. The active-site Proton donor is the Glu291. Residues His361, Asp405, and Arg409 each coordinate substrate. A c region spans residues 441 to 528; the sequence is GSTQQRWINN…ATAVWQYTAA (88 aa). The tract at residues 529 to 614 is d; sequence ETTPTIGHVG…SNAYNHFTIL (86 aa). One can recognise an IPT/TIG domain in the interval 532–612; that stretch reads PTIGHVGPVM…VNSNAYNHFT (81 aa). The CBM20 domain occupies 613 to 718; sequence ILTGDQVTVR…GTATVTVNWQ (106 aa). The interval 615–718 is e; sequence TGDQVTVRFV…GTATVTVNWQ (104 aa).

This sequence belongs to the glycosyl hydrolase 13 family. Monomer. The cofactor is Ca(2+).

The protein resides in the secreted. The catalysed reaction is Cyclizes part of a (1-&gt;4)-alpha-D-glucan chain by formation of a (1-&gt;4)-alpha-D-glucosidic bond.. The protein is Cyclomaltodextrin glucanotransferase (cgt) of Bacillus sp. (strain 6.6.3).